The following is a 281-amino-acid chain: Shikimate dehydrogenase (NADP(+)) (281 aa).

Residues 14 to 16 (SKS) and threonine 61 each bind shikimate. Lysine 65 serves as the catalytic Proton acceptor. Shikimate contacts are provided by asparagine 86 and aspartate 105. NADP(+) is bound by residues 130-134 (GAGGA), 154-159 (NRTAAK), and methionine 221. Residue tyrosine 223 participates in shikimate binding. An NADP(+)-binding site is contributed by glycine 245.

The protein belongs to the shikimate dehydrogenase family. As to quaternary structure, homodimer.

It carries out the reaction shikimate + NADP(+) = 3-dehydroshikimate + NADPH + H(+). The protein operates within metabolic intermediate biosynthesis; chorismate biosynthesis; chorismate from D-erythrose 4-phosphate and phosphoenolpyruvate: step 4/7. Functionally, involved in the biosynthesis of the chorismate, which leads to the biosynthesis of aromatic amino acids. Catalyzes the reversible NADPH linked reduction of 3-dehydroshikimate (DHSA) to yield shikimate (SA). This Azoarcus sp. (strain BH72) protein is Shikimate dehydrogenase (NADP(+)).